A 502-amino-acid polypeptide reads, in one-letter code: Probable malate:quinone oxidoreductase (502 aa).

The protein belongs to the MQO family. Requires FAD as cofactor.

The enzyme catalyses (S)-malate + a quinone = a quinol + oxaloacetate. It participates in carbohydrate metabolism; tricarboxylic acid cycle; oxaloacetate from (S)-malate (quinone route): step 1/1. The sequence is that of Probable malate:quinone oxidoreductase from Parasynechococcus marenigrum (strain WH8102).